We begin with the raw amino-acid sequence, 387 residues long: Phosphoglycerate kinase (387 aa).

Residues 21–23 (DLN), arginine 36, 59–62 (HLGR), arginine 113, and arginine 146 each bind substrate. ATP-binding positions include lysine 197, glutamate 314, and 340–343 (GGDT).

The protein belongs to the phosphoglycerate kinase family. As to quaternary structure, monomer.

It is found in the cytoplasm. The catalysed reaction is (2R)-3-phosphoglycerate + ATP = (2R)-3-phospho-glyceroyl phosphate + ADP. It participates in carbohydrate degradation; glycolysis; pyruvate from D-glyceraldehyde 3-phosphate: step 2/5. This is Phosphoglycerate kinase from Pectobacterium carotovorum subsp. carotovorum (strain PC1).